Consider the following 422-residue polypeptide: E3 ubiquitin-protein ligase CBLL2 (422 aa).

The RING-type zinc finger occupies 54–94 (CDKCDLPIKIYGRIIPCKHAFCYNCANLYDKIGYKICPRCS). Residues 93–151 (CSYPVLRIEEHKRGSVFMCSVVQGCKRTYLSQKSLQAHIKRRHKRARKQVASASLEKLR) are HYB domain. Residues 109-135 (FMCSVVQGCKRTYLSQKSLQAHIKRRH) form a C2H2-type zinc finger. Disordered stretches follow at residues 190–213 (MQQM…PELS) and 378–422 (QTDA…HRPY). Over residues 195-205 (HEQHNQPHKDL) the composition is skewed to basic and acidic residues. Positions 393-405 (LPPPPPTWSPPPS) are enriched in pro residues. Residues 410-422 (GSHHSYQRRHRPY) show a composition bias toward basic residues.

Homodimer.

The protein resides in the cytoplasm. It catalyses the reaction S-ubiquitinyl-[E2 ubiquitin-conjugating enzyme]-L-cysteine + [acceptor protein]-L-lysine = [E2 ubiquitin-conjugating enzyme]-L-cysteine + N(6)-ubiquitinyl-[acceptor protein]-L-lysine.. The protein operates within protein modification; protein ubiquitination. Functionally, E3 ubiquitin ligase catalyzing the covalent attachment of ubiquitin moieties onto substrate proteins. May operate on tyrosine-phosphorylated SRC substrates. In Macaca fascicularis (Crab-eating macaque), this protein is E3 ubiquitin-protein ligase CBLL2 (CBLL2).